Reading from the N-terminus, the 200-residue chain is uncharacterized protein (200 aa).

The 117-residue stretch at 3 to 119 folds into the Response regulatory domain; sequence RLFIAEDQRM…DLADAIRKCV (117 aa). 4-aspartylphosphate is present on aspartate 54. The region spanning 133–198 is the HTH luxR-type domain; the sequence is MMRDENPLTV…EAASIAEEKG (66 aa). The H-T-H motif DNA-binding region spans 157–176; the sequence is TKDITLELYLSQGTVRNYIS.

Phosphorylated by YvfT.

The protein localises to the cytoplasm. Functionally, member of the two-component regulatory system YvfT/YvfU. This is an uncharacterized protein from Bacillus subtilis (strain 168).